Consider the following 60-residue polypeptide: uncharacterized protein (60 aa).

This is an uncharacterized protein from Saccharomyces cerevisiae (strain ATCC 204508 / S288c) (Baker's yeast).